We begin with the raw amino-acid sequence, 142 residues long: 3-hydroxyacyl-[acyl-carrier-protein] dehydratase FabZ (142 aa).

The active site involves H49.

It belongs to the thioester dehydratase family. FabZ subfamily.

It is found in the cytoplasm. The catalysed reaction is a (3R)-hydroxyacyl-[ACP] = a (2E)-enoyl-[ACP] + H2O. Functionally, involved in unsaturated fatty acids biosynthesis. Catalyzes the dehydration of short chain beta-hydroxyacyl-ACPs and long chain saturated and unsaturated beta-hydroxyacyl-ACPs. The polypeptide is 3-hydroxyacyl-[acyl-carrier-protein] dehydratase FabZ (Deinococcus geothermalis (strain DSM 11300 / CIP 105573 / AG-3a)).